We begin with the raw amino-acid sequence, 231 residues long: Putative transglycosylase H16_A0665 (231 aa).

A helical membrane pass occupies residues F8–L28.

This sequence belongs to the glycosyltransferase 51 family.

The protein resides in the secreted. The protein localises to the membrane. Its pathway is cell wall biogenesis; peptidoglycan biosynthesis. Functionally, cell wall formation. In Cupriavidus necator (strain ATCC 17699 / DSM 428 / KCTC 22496 / NCIMB 10442 / H16 / Stanier 337) (Ralstonia eutropha), this protein is Putative transglycosylase H16_A0665.